A 116-amino-acid chain; its full sequence is Large ribosomal subunit protein uL18 (116 aa).

Belongs to the universal ribosomal protein uL18 family. Part of the 50S ribosomal subunit; part of the 5S rRNA/L5/L18/L25 subcomplex. Contacts the 5S and 23S rRNAs.

Functionally, this is one of the proteins that bind and probably mediate the attachment of the 5S RNA into the large ribosomal subunit, where it forms part of the central protuberance. The protein is Large ribosomal subunit protein uL18 of Acinetobacter baylyi (strain ATCC 33305 / BD413 / ADP1).